A 626-amino-acid polypeptide reads, in one-letter code: DEAD-box ATP-dependent RNA helicase 16 (626 aa).

The tract at residues 1-48 (MGKTKLKPVEDVNSEVVDEVEKAEEVEEQRNDREQEEEQKEEEAPKSF) is disordered. Residues 9–47 (VEDVNSEVVDEVEKAEEVEEQRNDREQEEEQKEEEAPKS) adopt a coiled-coil conformation. Residues 12-27 (VNSEVVDEVEKAEEVE) show a composition bias toward acidic residues. Positions 46-74 (KSFEELGLDSRLIRALTKKGIEKPTLIQQ) match the Q motif motif. Residues 77–259 (IPYILEGKDV…KLILHNPIVL (183 aa)) enclose the Helicase ATP-binding domain. Residue 90–97 (AKTGSGKT) coordinates ATP. The DEAD box signature appears at 207–210 (DEAD). Positions 293–477 (ALLKLEVVQK…PFPLLTENAV (185 aa)) constitute a Helicase C-terminal domain. A coiled-coil region spans residues 356–385 (IATDDNSQTKKQKEEAKGEANKENKKNNKR). Residues 363-381 (QTKKQKEEAKGEANKENKK) show a composition bias toward basic and acidic residues. Disordered stretches follow at residues 363 to 388 (QTKK…RSKP) and 568 to 626 (AMGN…QKTV).

This sequence belongs to the DEAD box helicase family. DDX56/DBP9 subfamily.

The enzyme catalyses ATP + H2O = ADP + phosphate + H(+). The chain is DEAD-box ATP-dependent RNA helicase 16 (RH16) from Arabidopsis thaliana (Mouse-ear cress).